Reading from the N-terminus, the 527-residue chain is Peptide chain release factor 3 (527 aa).

The 269-residue stretch at 9–277 (AKRRTFAIIS…AVVDWAPRPL (269 aa)) folds into the tr-type G domain. GTP is bound by residues 18–25 (SHPDAGKT), 86–90 (DTPGH), and 140–143 (NKLD).

Belongs to the TRAFAC class translation factor GTPase superfamily. Classic translation factor GTPase family. PrfC subfamily.

Its subcellular location is the cytoplasm. Functionally, increases the formation of ribosomal termination complexes and stimulates activities of RF-1 and RF-2. It binds guanine nucleotides and has strong preference for UGA stop codons. It may interact directly with the ribosome. The stimulation of RF-1 and RF-2 is significantly reduced by GTP and GDP, but not by GMP. This is Peptide chain release factor 3 from Pseudomonas putida (strain ATCC 47054 / DSM 6125 / CFBP 8728 / NCIMB 11950 / KT2440).